The chain runs to 120 residues: Protein Wnt-9 (120 aa).

Serine 1 carries the O-palmitoleoyl serine; by PORCN lipid modification. A disulfide bridge connects residues cysteine 90 and cysteine 101.

This sequence belongs to the Wnt family. Palmitoleoylation is required for efficient binding to frizzled receptors. Depalmitoleoylation leads to Wnt signaling pathway inhibition.

The protein resides in the secreted. It localises to the extracellular space. The protein localises to the extracellular matrix. Its function is as follows. Ligand for members of the frizzled family of seven transmembrane receptors. Probable developmental protein. May be a signaling molecule which affects the development of discrete regions of tissues. Is likely to signal over only few cell diameters. This Alopias vulpinus (Common thresher shark) protein is Protein Wnt-9 (WNT-9).